The primary structure comprises 186 residues: Hydra actinoporin-like toxin 5 (186 aa).

A signal peptide spans 1 to 20 (MLLYVCLVNLLLQSPSGVDS). Positions 158-160 (RDG) match the Cell attachment site motif.

Belongs to the actinoporin family. HALT subfamily. In terms of assembly, octamer or nonamer in membranes. Monomer in the soluble state. In vitro, interacts with folate receptor alpha (of target organism).

Its subcellular location is the nematocyst. It is found in the secreted. It localises to the target cell membrane. Pore-forming protein that forms hydrophilic pores and causes cytolysis. Compared to equinatoxin-2 (AC P61914), it reveals lower cytolysis activity (5-12-fold difference, tested on erythrocytes), a larger pore size (probably 2-3 nm) and different affinity to membrane lipids (100-fold lower affinity to sphingomyelin). Binds to sulfatides (SFT) as well as to the two sphingolipids, lysophosphatidic acid (LPA) and sphingosine-1-phosphate (S1P). It seems to bind more strongly to LPA than to S1P and SFT. Shows cytolytic activity on HeLa cells, with a different potency than its paralogs (from most potent to less potent: HALT-4&gt;HALT-6~HALT-1&gt;HALT-3&gt;HALT-7&gt;HALT-2). Pore formation is a multi-step process that involves specific recognition of membrane lipid by a protein aromatic residues rich region, firm binding to the membrane (mainly driven by hydrophobic interactions) accompanied by the transfer of the N-terminal region to the lipid-water interface and finally pore formation after oligomerization of monomers. In vitro, binds to the folate receptor alpha (FOLR1), a GPI-anchored membrane protein that plays a major role in the uptake of folate/folic acid into cells via endocytosis, suggesting a possible involvement of this receptor in the mechanism of HALT-1-induced cell lysis. In vivo, does not cause visible paralysis in larvae of the blowfly Sarcophaga faculata, the most common arthropod prey of Hydra. The protein is Hydra actinoporin-like toxin 5 of Hydra vulgaris (Hydra).